A 679-amino-acid chain; its full sequence is ATP-dependent zinc metalloprotease FtsH (679 aa).

The Cytoplasmic segment spans residues 1 to 6 (MNRIFR). A helical transmembrane segment spans residues 7–27 (NTIFYLLIFLVIVGIVSVFNS). Residues 28 to 114 (DQTETENVSF…IEPADETSGW (87 aa)) lie on the Extracellular side of the membrane. Residues 115-135 (VQFFTGIIPFIIIFILFFFLL) traverse the membrane as a helical segment. Residues 136–679 (SQAQGGGSRV…SFEDDTNKKE (544 aa)) are Cytoplasmic-facing. 206 to 213 (GPPGTGKT) contributes to the ATP binding site. H428 is a binding site for Zn(2+). E429 is a catalytic residue. Zn(2+) contacts are provided by H432 and D504. Composition is skewed to basic and acidic residues over residues 621 to 642 (LEKE…KEET) and 658 to 679 (PIEK…NKKE). The disordered stretch occupies residues 621 to 679 (LEKEKASESDVKVNINSKKEETPQVEAEQPQEPNTDEPIEKDPSVEDNRSFEDDTNKKE).

The protein in the central section; belongs to the AAA ATPase family. In the C-terminal section; belongs to the peptidase M41 family. In terms of assembly, homohexamer. The cofactor is Zn(2+).

It is found in the cell membrane. In terms of biological role, acts as a processive, ATP-dependent zinc metallopeptidase for both cytoplasmic and membrane proteins. Plays a role in the quality control of integral membrane proteins. The polypeptide is ATP-dependent zinc metalloprotease FtsH (Alkalihalophilus pseudofirmus (strain ATCC BAA-2126 / JCM 17055 / OF4) (Bacillus pseudofirmus)).